The chain runs to 74 residues: Sec-independent protein translocase protein TatA (74 aa).

A helical transmembrane segment spans residues Met-1–Gly-21.

It belongs to the TatA/E family. As to quaternary structure, the Tat system comprises two distinct complexes: a TatABC complex, containing multiple copies of TatA, TatB and TatC subunits, and a separate TatA complex, containing only TatA subunits. Substrates initially bind to the TatABC complex, which probably triggers association of the separate TatA complex to form the active translocon.

The protein localises to the cell inner membrane. Its function is as follows. Part of the twin-arginine translocation (Tat) system that transports large folded proteins containing a characteristic twin-arginine motif in their signal peptide across membranes. TatA could form the protein-conducting channel of the Tat system. In Nitrosospira multiformis (strain ATCC 25196 / NCIMB 11849 / C 71), this protein is Sec-independent protein translocase protein TatA.